The chain runs to 274 residues: Orotidine 5'-phosphate decarboxylase (274 aa).

The Proton donor role is filled by lysine 95.

The protein belongs to the OMP decarboxylase family. Type 2 subfamily.

The catalysed reaction is orotidine 5'-phosphate + H(+) = UMP + CO2. Its pathway is pyrimidine metabolism; UMP biosynthesis via de novo pathway; UMP from orotate: step 2/2. In Mycobacterium avium (strain 104), this protein is Orotidine 5'-phosphate decarboxylase.